Consider the following 625-residue polypeptide: Phosphomethylpyrimidine synthase (625 aa).

Residues Asn-231, Met-260, Tyr-289, His-325, 345–347 (SRG), 386–389 (DGLR), and Glu-425 contribute to the substrate site. His-429 provides a ligand contact to Zn(2+). Tyr-452 lines the substrate pocket. Zn(2+) is bound at residue His-493. Cys-573, Cys-576, and Cys-581 together coordinate [4Fe-4S] cluster.

It belongs to the ThiC family. In terms of assembly, homodimer. [4Fe-4S] cluster serves as cofactor.

The catalysed reaction is 5-amino-1-(5-phospho-beta-D-ribosyl)imidazole + S-adenosyl-L-methionine = 4-amino-2-methyl-5-(phosphooxymethyl)pyrimidine + CO + 5'-deoxyadenosine + formate + L-methionine + 3 H(+). Its pathway is cofactor biosynthesis; thiamine diphosphate biosynthesis. Functionally, catalyzes the synthesis of the hydroxymethylpyrimidine phosphate (HMP-P) moiety of thiamine from aminoimidazole ribotide (AIR) in a radical S-adenosyl-L-methionine (SAM)-dependent reaction. In Acinetobacter baumannii (strain AB0057), this protein is Phosphomethylpyrimidine synthase.